The sequence spans 155 residues: Small ribosomal subunit protein uS7 (155 aa).

The protein belongs to the universal ribosomal protein uS7 family. As to quaternary structure, part of the 30S ribosomal subunit. Contacts proteins S9 and S11.

Its function is as follows. One of the primary rRNA binding proteins, it binds directly to 16S rRNA where it nucleates assembly of the head domain of the 30S subunit. Is located at the subunit interface close to the decoding center, probably blocks exit of the E-site tRNA. The protein is Small ribosomal subunit protein uS7 of Chlorobium limicola (strain DSM 245 / NBRC 103803 / 6330).